Here is a 117-residue protein sequence, read N- to C-terminus: Venom nerve growth factor (117 aa).

Intrachain disulfides connect Cys-12/Cys-77, Cys-55/Cys-105, and Cys-65/Cys-107. Asn-21 is a glycosylation site (N-linked (GlcNAc...) asparagine).

This sequence belongs to the NGF-beta family. In terms of assembly, homodimer; non-covalently linked. As to expression, expressed by the venom gland.

The protein localises to the secreted. Its function is as follows. Nerve growth factor is important for the development and maintenance of the sympathetic and sensory nervous systems. It stimulates division and differentiation of sympathetic and embryonic sensory neurons as well as basal forebrain cholinergic neurons in the brain. Its relevance in the snake venom is not clear. However, it has been shown to inhibit metalloproteinase-dependent proteolysis of platelet glycoprotein Ib alpha, suggesting a metalloproteinase inhibition to prevent metalloprotease autodigestion and/or protection against prey proteases. Binds a lipid between the two protein chains in the homodimer. The lipid-bound form promotes histamine relase from mouse mast cells, contrary to the lipid-free form. The polypeptide is Venom nerve growth factor (Daboia russelii (Russel's viper)).